Consider the following 323-residue polypeptide: Beta-ketoacyl-[acyl-carrier-protein] synthase III (323 aa).

Catalysis depends on residues cysteine 114 and histidine 250. Positions 251–255 are ACP-binding; the sequence is QANLR. Residue asparagine 280 is part of the active site.

Belongs to the thiolase-like superfamily. FabH family. Homodimer.

It is found in the cytoplasm. It carries out the reaction malonyl-[ACP] + acetyl-CoA + H(+) = 3-oxobutanoyl-[ACP] + CO2 + CoA. The protein operates within lipid metabolism; fatty acid biosynthesis. In terms of biological role, catalyzes the condensation reaction of fatty acid synthesis by the addition to an acyl acceptor of two carbons from malonyl-ACP. Catalyzes the first condensation reaction which initiates fatty acid synthesis and may therefore play a role in governing the total rate of fatty acid production. Possesses both acetoacetyl-ACP synthase and acetyl transacylase activities. Its substrate specificity determines the biosynthesis of branched-chain and/or straight-chain of fatty acids. The sequence is that of Beta-ketoacyl-[acyl-carrier-protein] synthase III from Cereibacter sphaeroides (strain ATCC 17029 / ATH 2.4.9) (Rhodobacter sphaeroides).